Reading from the N-terminus, the 231-residue chain is Regulatory protein VanRc (231 aa).

The region spanning 4–117 (KIVVVDDEKE…EVVARVKTQL (114 aa)) is the Response regulatory domain. Position 53 is a 4-aspartylphosphate (Asp-53). A DNA-binding region (ompR/PhoB-type) is located at residues 132-231 (VEEYEKDGLI…VWGVGYIIEK (100 aa)).

Phosphorylated by VanSc.

The protein localises to the cytoplasm. In terms of biological role, member of the two-component regulatory system VanSc/VanRc. Binds to the promoter regions of target genes. Activates the transcription of vanC1 and vanXYC in response to vancomycin which results in vancomycin resistance. In Enterococcus gallinarum, this protein is Regulatory protein VanRc.